The chain runs to 243 residues: Ras-related protein Rab-12 (243 aa).

N-acetylmethionine is present on methionine 1. Positions 1–36 (MDPSAALHRRPAGGSLGAVSPALSGGQARRRKQPPR) are disordered. Phosphoserine is present on residues serine 15, serine 20, and serine 24. GTP-binding residues include glycine 51, valine 52, glycine 53, lysine 54, threonine 55, serine 72, and threonine 73. Threonine 55 contributes to the Mg(2+) binding site. 2 consecutive short sequence motifs (switch) follow at residues 64–78 (DTFCEACKSTVGVDF) and 96–113 (DTAGQERFNSITSAYYRS). The Mg(2+) site is built by threonine 73 and aspartate 96. Glycine 99 lines the GTP pocket. Serine 105 carries the phosphoserine; by LRRK2 modification. Residues asparagine 154, lysine 155, aspartate 157, serine 185, alanine 186, and lysine 187 each coordinate GTP. Residues cysteine 242 and cysteine 243 are each lipidated (S-geranylgeranyl cysteine).

It belongs to the small GTPase superfamily. Rab family. As to quaternary structure, interacts with RABIF and OPTN. Interacts with LRRK2; interaction facilitates phosphorylation of Ser-105. Interacts with GDI1, GDI2, CHM and CHML; these interactions are disrupted by phosphorylation on Ser-105. Interacts with RILPL1 and RILPL2; these interactions are dependent on phosphorylation of Ser-105. Mg(2+) serves as cofactor. Phosphorylation of Ser-105 in the switch II region by LRRK2 prevents the association of RAB regulatory proteins, including CHM, CHML and RAB GDP dissociation inhibitors GDI1 and GDI2. In terms of tissue distribution, ubiquitously expressed.

It localises to the recycling endosome membrane. The protein resides in the lysosome membrane. The protein localises to the golgi apparatus membrane. Its subcellular location is the cytoplasmic vesicle. It is found in the autophagosome. The catalysed reaction is GTP + H2O = GDP + phosphate + H(+). With respect to regulation, regulated by guanine nucleotide exchange factors (GEFs) including DENND3 which promote the exchange of bound GDP for free GTP. Regulated by GTPase activating proteins (GAPs) which increase the GTP hydrolysis activity. Inhibited by GDP dissociation inhibitors (GDIs). The small GTPases Rab are key regulators of intracellular membrane trafficking, from the formation of transport vesicles to their fusion with membranes. Rabs cycle between an inactive GDP-bound form and an active GTP-bound form that is able to recruit to membranes different set of downstream effectors directly responsible for vesicle formation, movement, tethering and fusion. RAB12 may play a role in protein transport from recycling endosomes to lysosomes regulating, for instance, the degradation of the transferrin receptor. Involved in autophagy. This Mus musculus (Mouse) protein is Ras-related protein Rab-12.